The sequence spans 315 residues: N-acetylneuraminate lyase (315 aa).

Ser59 and Ser60 together coordinate aceneuramate. Tyr149 acts as the Proton donor in catalysis. The Schiff-base intermediate with substrate role is filled by Lys177. Residues Ser179, Gly202, Asp204, Glu205, and Gly221 each coordinate aceneuramate.

It belongs to the DapA family. NanA subfamily. As to quaternary structure, homotetramer.

The protein localises to the cytoplasm. It catalyses the reaction aceneuramate = aldehydo-N-acetyl-D-mannosamine + pyruvate. It participates in amino-sugar metabolism; N-acetylneuraminate degradation; D-fructose 6-phosphate from N-acetylneuraminate: step 1/5. Functionally, catalyzes the reversible aldol cleavage of N-acetylneuraminic acid (sialic acid; Neu5Ac) to form pyruvate and N-acetylmannosamine (ManNAc) via a Schiff base intermediate. Cannot use 2,7-anhydro-Neu5Ac. Involved in the degradation of sialic acid, which is present in the host mucus layer and represents a much-coveted source of nutrients for R.gnavus, a prevalent member of the normal gut microbiota. This is N-acetylneuraminate lyase from Mediterraneibacter gnavus (strain ATCC 29149 / DSM 114966 / JCM 6515 / VPI C7-9) (Ruminococcus gnavus).